We begin with the raw amino-acid sequence, 394 residues long: Protein TsgA homolog (394 aa).

12 helical membrane passes run 11–31 (WISFFSYALTGALVIVTGMVM), 51–71 (FLNAGILISIFLNAWLMEIVP), 78–98 (FGFVLMVAAVAGLMVSHSIAL), 101–121 (VSMFVLGLVSGITMSIGTFLI), 134–154 (LLFTDSFFSMAGMIFPMVAAV), 162–182 (WYWVYACIGLVYVAIFVLTFG), 206–226 (IGVLFLSVAALCYILGQLGFI), 250–270 (FWMSYMFGMWAFSFILRFFDL), 273–293 (ILTVLAGLATVLMYLFINGAP), 297–317 (AWFILTLGFFSSAIYTSIITL), 332–352 (FVLTCGTIGTMLTFVVTGPIV), and 361–381 (LQTANGLYAVVFVMCLILGFV).

Belongs to the major facilitator superfamily. TsgA family.

The protein localises to the cell inner membrane. In Enterobacter sp. (strain 638), this protein is Protein TsgA homolog.